Here is a 67-residue protein sequence, read N- to C-terminus: Beta-defensin 103A (67 aa).

An N-terminal signal peptide occupies residues 1–22; it reads MRIHYLLFTLLFLFLVPVPGHG. 3 cysteine pairs are disulfide-bonded: C33-C62, C40-C55, and C45-C63.

The protein belongs to the beta-defensin family.

The protein resides in the secreted. Functionally, exhibits antimicrobial activity against Gram-positive and Gram-negative bacteria. This Gorilla gorilla gorilla (Western lowland gorilla) protein is Beta-defensin 103A (DEFB103A).